Here is a 299-residue protein sequence, read N- to C-terminus: Nucleotide-binding protein Moth_0258 (299 aa).

14 to 21 contributes to the ATP binding site; that stretch reads GLSGAGKT. 68–71 is a GTP binding site; sequence DIRG.

Belongs to the RapZ-like family.

Displays ATPase and GTPase activities. In Moorella thermoacetica (strain ATCC 39073 / JCM 9320), this protein is Nucleotide-binding protein Moth_0258.